Here is a 187-residue protein sequence, read N- to C-terminus: Orotate phosphoribosyltransferase (187 aa).

110 to 118 (EDVVTTGGS) lines the 5-phospho-alpha-D-ribose 1-diphosphate pocket. Thr-114 and Arg-142 together coordinate orotate.

The protein belongs to the purine/pyrimidine phosphoribosyltransferase family. PyrE subfamily. As to quaternary structure, homodimer. It depends on Mg(2+) as a cofactor.

The catalysed reaction is orotidine 5'-phosphate + diphosphate = orotate + 5-phospho-alpha-D-ribose 1-diphosphate. It participates in pyrimidine metabolism; UMP biosynthesis via de novo pathway; UMP from orotate: step 1/2. Its function is as follows. Catalyzes the transfer of a ribosyl phosphate group from 5-phosphoribose 1-diphosphate to orotate, leading to the formation of orotidine monophosphate (OMP). The chain is Orotate phosphoribosyltransferase from Thermotoga neapolitana (strain ATCC 49049 / DSM 4359 / NBRC 107923 / NS-E).